A 130-amino-acid polypeptide reads, in one-letter code: MIGNWNYGTGRRKSAVARVFIKAGKGDIIVNGKPIADYFSRETSLMIVRQPLELTNHGQTFDIKVNVNGGGETGQAGAVRHGITRALIDYDATLKPSLSSAGFVTRDAREVERKKVGLRKARRAKQFSKR.

The protein belongs to the universal ribosomal protein uS9 family.

The sequence is that of Small ribosomal subunit protein uS9 from Burkholderia cenocepacia (strain HI2424).